Here is a 313-residue protein sequence, read N- to C-terminus: Tetraspanning orphan receptor (313 aa).

At Pro-1–Tyr-54 the chain is on the extracellular side. A helical transmembrane segment spans residues Ile-55–Ile-75. At Thr-76–Leu-82 the chain is on the cytoplasmic side. Residues Leu-83–Phe-103 form a helical membrane-spanning segment. Residues Met-104 to Thr-129 are Extracellular-facing. Residues Phe-130–Val-150 form a helical membrane-spanning segment. Residues Trp-151–Cys-313 lie on the Cytoplasmic side of the membrane. Disordered stretches follow at residues Asn-192–Ala-218 and Asn-279–Cys-313. Positions Asn-279–Thr-295 are enriched in low complexity. Polar residues predominate over residues Gln-301 to Cys-313.

As to quaternary structure, interacts (via N-terminal extracellular domain) with human C2a. Phosphorylated on tyrosine residues.

It localises to the cell membrane. Its function is as follows. Cell surface receptor that binds to human complement C2a protein. This results in inhibition of the classical and lectin pathways of complement activation, probably due to interference with binding of C2a to C4b and interference with cleavage by C1 or MASP2 such that C3 convertase cannot be formed. This infers resistance to complement-mediated cell lysis, allowing parasite survival and infection. The chain is Tetraspanning orphan receptor from Schistosoma haematobium (Blood fluke).